We begin with the raw amino-acid sequence, 448 residues long: 4-hydroxybenzoate transporter PcaK (448 aa).

Residues 1-30 (MNQAQNSVGKSLDVQSFINQQPLSRYQWRV) lie on the Cytoplasmic side of the membrane. The chain crosses the membrane as a helical span at residues 31–51 (VLLCFLIVFLDGLDTAAMGFI). Topologically, residues 52 to 67 (APALSQEWGIDRASLG) are periplasmic. A helical membrane pass occupies residues 68–88 (PVMSAALIGMVFGALGSGPLA). The Cytoplasmic segment spans residues 89–94 (DRFGRK). A helical transmembrane segment spans residues 95–115 (GVLVGAVLVFGGFSLASAYAT). Topologically, residues 116 to 119 (NVDQ) are periplasmic. The helical transmembrane segment at 120–140 (LLVLRFLTGLGLGAGMPNATT) threads the bilayer. Residues 141–152 (LLSEYTPERLKS) lie on the Cytoplasmic side of the membrane. Residues 153 to 173 (LLVTSMFCGFNLGMAGGGFIS) traverse the membrane as a helical segment. Topologically, residues 174-184 (AKMIPAYGWHS) are periplasmic. Residues 185-205 (LLVIGGVLPLLLALVLMVWLP) form a helical membrane-spanning segment. The Cytoplasmic portion of the chain corresponds to 206 to 261 (ESARFLVVRNRGTDKIRKTLSPIAPQVVAEAGSFSVPEQKAVAARSVFAVIFSGTY). Residues 262–282 (GLGTMLLWLTYFMGLVIVYLL) form a helical membrane-spanning segment. The Periplasmic segment spans residues 283–301 (TSWLPTLMRDSGASMEQAA). The chain crosses the membrane as a helical span at residues 302–322 (FIGALFQFGGVLSAVGVGWAM). At 323 to 329 (DRYNPHK) the chain is on the cytoplasmic side. Residues 330–350 (VIGIFYLLAGVFAYAVGQSLG) traverse the membrane as a helical segment. Position 351 (Asn351) is a topological domain, periplasmic. A helical membrane pass occupies residues 352–372 (ITVLATLVLIAGMCVNGAQSA). The Cytoplasmic portion of the chain corresponds to 373-398 (MPSLAARFYPTQGRATGVSWMLGIGR). The helical transmembrane segment at 399 to 419 (FGAILGAWSGATLLGLGWNFE) threads the bilayer. Over 420 to 421 (QV) the chain is Periplasmic. Residues 422–442 (LTALLVPAALATVGVIVKGLV) form a helical membrane-spanning segment. At 443 to 448 (SHADAT) the chain is on the cytoplasmic side.

Belongs to the major facilitator superfamily. Aromatic acid:H(+) symporter (AAHS) (TC 2.A.1.15) family.

The protein localises to the cell inner membrane. Transports 4-hydroxybenzoate (4-HBA) and protocatechuate across the membrane. Driven by the proton motive force. Also functions as a chemoreceptor, which is required for chemotaxis to aromatic acids. The protein is 4-hydroxybenzoate transporter PcaK (pcaK) of Pseudomonas putida (Arthrobacter siderocapsulatus).